The following is a 266-amino-acid chain: Tryptophan synthase alpha chain (266 aa).

Residues Glu49 and Asp60 each act as proton acceptor in the active site.

This sequence belongs to the TrpA family. Tetramer of two alpha and two beta chains.

The catalysed reaction is (1S,2R)-1-C-(indol-3-yl)glycerol 3-phosphate + L-serine = D-glyceraldehyde 3-phosphate + L-tryptophan + H2O. It participates in amino-acid biosynthesis; L-tryptophan biosynthesis; L-tryptophan from chorismate: step 5/5. Functionally, the alpha subunit is responsible for the aldol cleavage of indoleglycerol phosphate to indole and glyceraldehyde 3-phosphate. The chain is Tryptophan synthase alpha chain from Thioalkalivibrio sulfidiphilus (strain HL-EbGR7).